A 94-amino-acid polypeptide reads, in one-letter code: Neutrophil defensin 6 (94 aa).

A signal peptide spans 1–19 (MRTIAILAAILLFALLAQA). Positions 20–61 (KSLQETADEAATQEQPGEDDQDLAVSFEENGLSTLRASGSQA) are excised as a propeptide. 3 disulfides stabilise this stretch: C65–C93, C67–C82, and C72–C92.

This sequence belongs to the alpha-defensin family.

The protein resides in the secreted. Its function is as follows. Defensins 6 and 7 have bacteriostatic activity against Gram-positive bacteria S.aureus and L.monocytogenes and Gram-negative bacterium E.coli and antifungal activity against C.neoformans. Defensin 7 has microbicidial activity against Gram-positive bacteria S.aureus and L.monocytogenes. This Macaca mulatta (Rhesus macaque) protein is Neutrophil defensin 6.